We begin with the raw amino-acid sequence, 219 residues long: Sugar fermentation stimulation protein homolog (219 aa).

Belongs to the SfsA family.

This is Sugar fermentation stimulation protein homolog from Archaeoglobus fulgidus (strain ATCC 49558 / DSM 4304 / JCM 9628 / NBRC 100126 / VC-16).